The sequence spans 115 residues: MRMDGSDFEDRKVSKPSPVLPFDVSNIGDLSQGVHSPLGISHFDSKNPTPFGRSTKNSVYEYETVTPYSRFKVDKKFGSATSVSPVHTKAEEPGLGLTPMNSADFSNKIASRYRS.

The disordered stretch occupies residues S82–S115. A compositionally biased stretch (polar residues) spans P99–I109.

The protein localises to the nucleus. Its function is as follows. Has a role in meiosis. This is Meiotically up-regulated gene 168 protein (mug168) from Schizosaccharomyces pombe (strain 972 / ATCC 24843) (Fission yeast).